A 224-amino-acid polypeptide reads, in one-letter code: ATP-dependent dethiobiotin synthetase BioD (224 aa).

Residue 12-17 (GVGKTF) participates in ATP binding. Thr16 serves as a coordination point for Mg(2+). Lys37 is an active-site residue. Thr41 serves as a coordination point for substrate. Glu107 provides a ligand contact to Mg(2+). ATP-binding positions include 107–110 (EGAG), 167–168 (GS), 197–199 (PEG), and Glu204.

The protein belongs to the dethiobiotin synthetase family. Homodimer. Mg(2+) is required as a cofactor.

The protein localises to the cytoplasm. It catalyses the reaction (7R,8S)-7,8-diammoniononanoate + CO2 + ATP = (4R,5S)-dethiobiotin + ADP + phosphate + 3 H(+). It functions in the pathway cofactor biosynthesis; biotin biosynthesis; biotin from 7,8-diaminononanoate: step 1/2. Catalyzes a mechanistically unusual reaction, the ATP-dependent insertion of CO2 between the N7 and N8 nitrogen atoms of 7,8-diaminopelargonic acid (DAPA, also called 7,8-diammoniononanoate) to form a ureido ring. In Corynebacterium glutamicum (strain R), this protein is ATP-dependent dethiobiotin synthetase BioD.